Reading from the N-terminus, the 287-residue chain is Co-chaperone protein DjlA (287 aa).

Over 1 to 6 (MQIFGK) the chain is Periplasmic. A helical membrane pass occupies residues 7–30 (ILGAFFGFLFGGVFGALFGLFIGH). Topologically, residues 31 to 287 (QFDKARRLSQ…DLIKKEKGFK (257 aa)) are cytoplasmic. The tract at residues 192-213 (GGFGGQQHQSHHSSSHGGWQQA) is disordered. A J domain is found at 221 to 287 (DAYKILGIDA…DLIKKEKGFK (67 aa)).

Homodimer.

It is found in the cell inner membrane. Functionally, regulatory DnaK co-chaperone. Direct interaction between DnaK and DjlA is needed for the induction of the wcaABCDE operon, involved in the synthesis of a colanic acid polysaccharide capsule, possibly through activation of the RcsB/RcsC phosphotransfer signaling pathway. The colanic acid capsule may help the bacterium survive conditions outside the host. In Vibrio vulnificus (strain YJ016), this protein is Co-chaperone protein DjlA.